Consider the following 509-residue polypeptide: DNA nucleotidylexotransferase (509 aa).

A disordered region spans residues 1 to 25; it reads MDPLCTASSGPRKKRPRQVGASMAS. The Nuclear localization signal signature appears at 11–17; the sequence is PRKKRPR. A BRCT domain is found at 27 to 124; that stretch reads PHDIKFQNLV…KPVEITGKHQ (98 aa). Positions 151 to 509 are mediates interaction with DNTTIP2; that stretch reads SQYACQRKTT…DYIEPWERNA (359 aa). Residues 258–262 form an involved in DNA binding region; sequence VGLKT. Residues 333 to 338 and 342 to 345 contribute to the a 2'-deoxyribonucleoside 5'-triphosphate site; these read GFRRGK and HDVD. Residues Asp343, Asp345, and Asp433 each contribute to the Mg(2+) site. 448–449 is a binding site for a 2'-deoxyribonucleoside 5'-triphosphate; that stretch reads GW.

This sequence belongs to the DNA polymerase type-X family. As to quaternary structure, interacts with PRP19 and DNTTIP1. Forms a ternary complex with DNTTIP2 and core histone. Released from this complex by PCNA. Interacts with TRERF1. Mg(2+) is required as a cofactor.

The protein resides in the nucleus. The catalysed reaction is DNA(n) + a 2'-deoxyribonucleoside 5'-triphosphate = DNA(n+1) + diphosphate. Functionally, template-independent DNA polymerase which catalyzes the random addition of deoxynucleoside 5'-triphosphate to the 3'-end of a DNA initiator. One of the in vivo functions of this enzyme is the addition of nucleotides at the junction (N region) of rearranged Ig heavy chain and T-cell receptor gene segments during the maturation of B- and T-cells. The protein is DNA nucleotidylexotransferase (DNTT) of Bos taurus (Bovine).